A 72-amino-acid chain; its full sequence is Translation initiation factor IF-1 (72 aa).

An S1-like domain is found at 1-72; it reads MSKEDVIEMQ…TRGRITWRAK (72 aa).

This sequence belongs to the IF-1 family. In terms of assembly, component of the 30S ribosomal translation pre-initiation complex which assembles on the 30S ribosome in the order IF-2 and IF-3, IF-1 and N-formylmethionyl-tRNA(fMet); mRNA recruitment can occur at any time during PIC assembly.

The protein localises to the cytoplasm. One of the essential components for the initiation of protein synthesis. Stabilizes the binding of IF-2 and IF-3 on the 30S subunit to which N-formylmethionyl-tRNA(fMet) subsequently binds. Helps modulate mRNA selection, yielding the 30S pre-initiation complex (PIC). Upon addition of the 50S ribosomal subunit IF-1, IF-2 and IF-3 are released leaving the mature 70S translation initiation complex. The sequence is that of Translation initiation factor IF-1 from Clostridium acetobutylicum (strain ATCC 824 / DSM 792 / JCM 1419 / IAM 19013 / LMG 5710 / NBRC 13948 / NRRL B-527 / VKM B-1787 / 2291 / W).